Here is a 656-residue protein sequence, read N- to C-terminus: UvrABC system protein B (656 aa).

Positions 29 to 414 constitute a Helicase ATP-binding domain; sequence KLSEFKTKQQ…SLSQNNVIEQ (386 aa). Residue 42 to 49 coordinates ATP; it reads GATGTGKT. Positions 95–118 match the Beta-hairpin motif; sequence YFDFYQPEAYLPSKGIYIEKSATV. Residues 434 to 596 enclose the Helicase C-terminal domain; that stretch reads QVEDLIEEII…KTPKTVVKPL (163 aa). The UVR domain maps to 614-649; it reads AALIKQLTKEMKKAAANQNYELAIEIRDSIFELEKE.

This sequence belongs to the UvrB family. Forms a heterotetramer with UvrA during the search for lesions. Interacts with UvrC in an incision complex.

The protein localises to the cytoplasm. In terms of biological role, the UvrABC repair system catalyzes the recognition and processing of DNA lesions. A damage recognition complex composed of 2 UvrA and 2 UvrB subunits scans DNA for abnormalities. Upon binding of the UvrA(2)B(2) complex to a putative damaged site, the DNA wraps around one UvrB monomer. DNA wrap is dependent on ATP binding by UvrB and probably causes local melting of the DNA helix, facilitating insertion of UvrB beta-hairpin between the DNA strands. Then UvrB probes one DNA strand for the presence of a lesion. If a lesion is found the UvrA subunits dissociate and the UvrB-DNA preincision complex is formed. This complex is subsequently bound by UvrC and the second UvrB is released. If no lesion is found, the DNA wraps around the other UvrB subunit that will check the other stand for damage. The protein is UvrABC system protein B of Mycoplasma genitalium (strain ATCC 33530 / DSM 19775 / NCTC 10195 / G37) (Mycoplasmoides genitalium).